We begin with the raw amino-acid sequence, 30 residues long: Bacteriocin SRCAM 37 (30 aa).

It belongs to the bacteriocin class IIA/YGNGV family.

The protein localises to the secreted. Functionally, bacteriocin with antibacterial activity against C.jejuni. The protein is Bacteriocin SRCAM 37 of Paenibacillus polymyxa (Bacillus polymyxa).